Reading from the N-terminus, the 372-residue chain is MSHNTFGHLFRVTTWGESHGPALGCVVDGCPPGIALTAEMIQVFLDKRRPGNGKFVTQRQEPDAVRILSGVFEDARSNGQRTTGTPISLMIENTDQRSKDYSEIAQAFRPGHADYAYFAKYGVRDYRGGGRSSARETAARVAAGAVARLIIPGVTVRAALVQIGPHKIDRSNWDWAQTEQNPYWSPDAAIVPVWEEHLEKIRKAGSSTGAVVEVEATGVPAGWGAPLYAKLDAELAAALMSINAAKGVEIGDGFDSAALTGEDNADTMRMGDDGQPVFQSNHAGGILGGISSGQPIVARVAFKPTSSILIPRETVNEAGEEIELRTKGRHDPCVGIRGVPVVEAMTACVLADAFLRHRGQTGREHFPLGASA.

Arg48 provides a ligand contact to NADP(+). FMN contacts are provided by residues 131 to 133, 243 to 244, Gly288, 303 to 307, and Arg329; these read RSS, NA, and KPTSS.

Belongs to the chorismate synthase family. As to quaternary structure, homotetramer. The cofactor is FMNH2.

The enzyme catalyses 5-O-(1-carboxyvinyl)-3-phosphoshikimate = chorismate + phosphate. Its pathway is metabolic intermediate biosynthesis; chorismate biosynthesis; chorismate from D-erythrose 4-phosphate and phosphoenolpyruvate: step 7/7. Catalyzes the anti-1,4-elimination of the C-3 phosphate and the C-6 proR hydrogen from 5-enolpyruvylshikimate-3-phosphate (EPSP) to yield chorismate, which is the branch point compound that serves as the starting substrate for the three terminal pathways of aromatic amino acid biosynthesis. This reaction introduces a second double bond into the aromatic ring system. The sequence is that of Chorismate synthase from Caulobacter vibrioides (strain ATCC 19089 / CIP 103742 / CB 15) (Caulobacter crescentus).